Consider the following 413-residue polypeptide: Multifunctional CCA protein (413 aa).

Residues Gly8 and Arg11 each coordinate ATP. Residues Gly8 and Arg11 each contribute to the CTP site. The Mg(2+) site is built by Asp21 and Asp23. Positions 91, 143, and 146 each coordinate ATP. Positions 91, 143, and 146 each coordinate CTP. Positions 232-333 (TGVHVMMVVD…VRLFERSDAL (102 aa)) constitute an HD domain.

This sequence belongs to the tRNA nucleotidyltransferase/poly(A) polymerase family. Bacterial CCA-adding enzyme type 1 subfamily. Monomer. Can also form homodimers and oligomers. The cofactor is Mg(2+). It depends on Ni(2+) as a cofactor.

It carries out the reaction a tRNA precursor + 2 CTP + ATP = a tRNA with a 3' CCA end + 3 diphosphate. It catalyses the reaction a tRNA with a 3' CCA end + 2 CTP + ATP = a tRNA with a 3' CCACCA end + 3 diphosphate. Catalyzes the addition and repair of the essential 3'-terminal CCA sequence in tRNAs without using a nucleic acid template. Adds these three nucleotides in the order of C, C, and A to the tRNA nucleotide-73, using CTP and ATP as substrates and producing inorganic pyrophosphate. tRNA 3'-terminal CCA addition is required both for tRNA processing and repair. Also involved in tRNA surveillance by mediating tandem CCA addition to generate a CCACCA at the 3' terminus of unstable tRNAs. While stable tRNAs receive only 3'-terminal CCA, unstable tRNAs are marked with CCACCA and rapidly degraded. This Burkholderia vietnamiensis (strain G4 / LMG 22486) (Burkholderia cepacia (strain R1808)) protein is Multifunctional CCA protein.